The following is a 338-amino-acid chain: 1-aminocyclopropane-1-carboxylate deaminase (338 aa).

Lysine 51 is subject to N6-(pyridoxal phosphate)lysine. Serine 78 acts as the Nucleophile in catalysis.

It belongs to the ACC deaminase/D-cysteine desulfhydrase family. In terms of assembly, homotrimer. Pyridoxal 5'-phosphate serves as cofactor.

The catalysed reaction is 1-aminocyclopropane-1-carboxylate + H2O = 2-oxobutanoate + NH4(+). Its function is as follows. Catalyzes a cyclopropane ring-opening reaction, the irreversible conversion of 1-aminocyclopropane-1-carboxylate (ACC) to ammonia and alpha-ketobutyrate. Allows growth on ACC as a nitrogen source. The polypeptide is 1-aminocyclopropane-1-carboxylate deaminase (Pseudomonas sp. (strain ACP)).